The primary structure comprises 226 residues: Leucyl/phenylalanyl-tRNA--protein transferase (226 aa).

Belongs to the L/F-transferase family.

It localises to the cytoplasm. It carries out the reaction N-terminal L-lysyl-[protein] + L-leucyl-tRNA(Leu) = N-terminal L-leucyl-L-lysyl-[protein] + tRNA(Leu) + H(+). The enzyme catalyses N-terminal L-arginyl-[protein] + L-leucyl-tRNA(Leu) = N-terminal L-leucyl-L-arginyl-[protein] + tRNA(Leu) + H(+). The catalysed reaction is L-phenylalanyl-tRNA(Phe) + an N-terminal L-alpha-aminoacyl-[protein] = an N-terminal L-phenylalanyl-L-alpha-aminoacyl-[protein] + tRNA(Phe). Functions in the N-end rule pathway of protein degradation where it conjugates Leu, Phe and, less efficiently, Met from aminoacyl-tRNAs to the N-termini of proteins containing an N-terminal arginine or lysine. The polypeptide is Leucyl/phenylalanyl-tRNA--protein transferase (Pseudomonas aeruginosa (strain ATCC 15692 / DSM 22644 / CIP 104116 / JCM 14847 / LMG 12228 / 1C / PRS 101 / PAO1)).